The chain runs to 233 residues: Small ribosomal subunit protein uS3 (233 aa).

Residues 39–107 (VRQFLTKELS…PAQINIAEVR (69 aa)) form the KH type-2 domain.

It belongs to the universal ribosomal protein uS3 family. In terms of assembly, part of the 30S ribosomal subunit. Forms a tight complex with proteins S10 and S14.

Functionally, binds the lower part of the 30S subunit head. Binds mRNA in the 70S ribosome, positioning it for translation. This Vibrio vulnificus (strain CMCP6) protein is Small ribosomal subunit protein uS3.